A 372-amino-acid chain; its full sequence is L-selectin (372 aa).

The N-terminal stretch at 1 to 28 (MVFPWRCQSAQRGSWSFLKLWIRTLLCC) is a signal peptide. Positions 29–38 (DLLPHHGTHC) are excised as a propeptide. At 39–332 (WTYHYSERSM…FSKIKEGDYN (294 aa)) the chain is on the extracellular side. In terms of domain architecture, C-type lectin spans 55–155 (KFCKHNYTDL…ACHKRKAALC (101 aa)). Disulfide bonds link Cys57/Cys155, Cys128/Cys147, Cys128/Cys160, Cys160/Cys171, Cys165/Cys180, Cys182/Cys191, Cys197/Cys241, Cys227/Cys254, Cys259/Cys303, and Cys289/Cys316. Asn60 and Asn104 each carry an N-linked (GlcNAc...) asparagine glycan. Ca(2+) is bound by residues Glu118, Asn120, Glu126, Asn143, and Asp144. Residues 156–192 (YTASCQPESCNRHGECVETINNNTCICDPGYYGPQCQ) form the EGF-like domain. Asn177 is a glycosylation site (N-linked (GlcNAc...) asparagine). Sushi domains follow at residues 195–256 (IQCE…ICQV) and 257–318 (IQCM…ICQK). N-linked (GlcNAc...) asparagine glycans are attached at residues Asn226, Asn246, and Asn278. The helical transmembrane segment at 333–355 (PLFIPVAVMVTAFSGLAFIIWLA) threads the bilayer. Over 356–372 (RRLKKGKKSQERMDDPY) the chain is Cytoplasmic.

The protein belongs to the selectin/LECAM family. In terms of assembly, interaction with SELPLG/PSGL1 and PODXL2 is required for promoting recruitment and rolling of leukocytes. This interaction is dependent on the sialyl Lewis X glycan modification of SELPLG and PODXL2, and tyrosine sulfation modifications of SELPLG. Sulfation on 'Tyr-51' of SELPLG is important for L-selectin binding. Post-translationally, N-glycosylated. Expressed in peripheral blood mononuclear cells (PBMC), spleen and thymus.

The protein localises to the cell membrane. Functionally, calcium-dependent lectin that mediates cell adhesion by binding to glycoproteins on neighboring cells. Mediates the adherence of lymphocytes to endothelial cells of high endothelial venules in peripheral lymph nodes. Promotes initial tethering and rolling of leukocytes in endothelia. This is L-selectin (Sell) from Rattus norvegicus (Rat).